Reading from the N-terminus, the 38-residue chain is Photosystem II reaction center protein L (38 aa).

Residues 17–37 (SLYWGLLLIFVLAVLFSSYIF) form a helical membrane-spanning segment.

It belongs to the PsbL family. As to quaternary structure, PSII is composed of 1 copy each of membrane proteins PsbA, PsbB, PsbC, PsbD, PsbE, PsbF, PsbH, PsbI, PsbJ, PsbK, PsbL, PsbM, PsbT, PsbX, PsbY, PsbZ, Psb30/Ycf12, at least 3 peripheral proteins of the oxygen-evolving complex and a large number of cofactors. It forms dimeric complexes.

The protein resides in the plastid. Its subcellular location is the chloroplast thylakoid membrane. In terms of biological role, one of the components of the core complex of photosystem II (PSII). PSII is a light-driven water:plastoquinone oxidoreductase that uses light energy to abstract electrons from H(2)O, generating O(2) and a proton gradient subsequently used for ATP formation. It consists of a core antenna complex that captures photons, and an electron transfer chain that converts photonic excitation into a charge separation. This subunit is found at the monomer-monomer interface and is required for correct PSII assembly and/or dimerization. This Oltmannsiellopsis viridis (Marine flagellate) protein is Photosystem II reaction center protein L.